Consider the following 331-residue polypeptide: Phosphate acyltransferase (331 aa).

Belongs to the PlsX family. In terms of assembly, homodimer. Probably interacts with PlsY.

Its subcellular location is the cytoplasm. It carries out the reaction a fatty acyl-[ACP] + phosphate = an acyl phosphate + holo-[ACP]. It participates in lipid metabolism; phospholipid metabolism. Functionally, catalyzes the reversible formation of acyl-phosphate (acyl-PO(4)) from acyl-[acyl-carrier-protein] (acyl-ACP). This enzyme utilizes acyl-ACP as fatty acyl donor, but not acyl-CoA. This chain is Phosphate acyltransferase, found in Chlorobaculum tepidum (strain ATCC 49652 / DSM 12025 / NBRC 103806 / TLS) (Chlorobium tepidum).